The primary structure comprises 108 residues: MTVKVRKGDTVLVIAGKDKGAKGKVIAAYPRQDKVLVEGVNRVKKHTRISTTQRGAKTGGIVTQEAPIHVSNVMVLDSDGKPTRVGYRIDDNGQKVRIARSTGKDLSS.

Belongs to the universal ribosomal protein uL24 family. As to quaternary structure, part of the 50S ribosomal subunit.

In terms of biological role, one of two assembly initiator proteins, it binds directly to the 5'-end of the 23S rRNA, where it nucleates assembly of the 50S subunit. Its function is as follows. One of the proteins that surrounds the polypeptide exit tunnel on the outside of the subunit. The polypeptide is Large ribosomal subunit protein uL24 (Salinispora tropica (strain ATCC BAA-916 / DSM 44818 / JCM 13857 / NBRC 105044 / CNB-440)).